A 505-amino-acid polypeptide reads, in one-letter code: Histidine ammonia-lyase (505 aa).

Positions 141-143 (ASG) form a cross-link, 5-imidazolinone (Ala-Gly). 2,3-didehydroalanine (Ser) is present on serine 142.

The protein belongs to the PAL/histidase family. Post-translationally, contains an active site 4-methylidene-imidazol-5-one (MIO), which is formed autocatalytically by cyclization and dehydration of residues Ala-Ser-Gly.

The protein localises to the cytoplasm. The enzyme catalyses L-histidine = trans-urocanate + NH4(+). The protein operates within amino-acid degradation; L-histidine degradation into L-glutamate; N-formimidoyl-L-glutamate from L-histidine: step 1/3. The protein is Histidine ammonia-lyase of Bacillus cereus (strain 03BB102).